The primary structure comprises 305 residues: Transcription factor bHLH18 (305 aa).

The tract at residues 41 to 67 (LKTTHISPNLHPFSSSNPPPPKHQPSS) is disordered. Polar residues predominate over residues 44-56 (THISPNLHPFSSS). Positions 122 to 171 (SNAQDHILAERKRREKLTQRFVALSALIPGLKKMDKASVLGDAIKHIKYL) constitute a bHLH domain. Residues 201–224 (DENHQPSSSSSSDGNRNSSSSNLP) form a disordered region. A compositionally biased stretch (low complexity) spans 207–222 (SSSSSSDGNRNSSSSN).

In terms of assembly, homodimer. Expressed in roots.

It localises to the nucleus. The sequence is that of Transcription factor bHLH18 (BHLH18) from Arabidopsis thaliana (Mouse-ear cress).